Here is a 338-residue protein sequence, read N- to C-terminus: Mitoferrin-1 (338 aa).

The tract at residues 1–37 (MELRRGGVGNQAAGRRMDGDCRDGGCGSKDAGSEDYE) is disordered. Solcar repeat units lie at residues 43–131 (ASVS…MKRT), 141–225 (NSHL…LQEQ), and 232–326 (YNPQ…FKYI). 6 helical membrane passes run 45–64 (VSTH…SIMY), 106–125 (GLNV…FACY), 143–162 (HLAN…AVMN), 200–219 (SYTT…FITY), 234–253 (PQSH…AATT), and 301–320 (GIQA…WSVY).

Belongs to the mitochondrial carrier (TC 2.A.29) family. As to quaternary structure, interacts with ACB10; this interaction stabilizes SLC25A37 and enhances the function of SLC25A37 to import mitochondrial iron during erythroid differentiation. Highly expressed in hematopoietic organs, fetal liver, bone marrow and spleen.

The protein localises to the mitochondrion inner membrane. It catalyses the reaction Fe(2+)(in) = Fe(2+)(out). Functionally, mitochondrial iron transporter that specifically mediates iron uptake in developing erythroid cells, thereby playing an essential role in heme biosynthesis. This Mus musculus (Mouse) protein is Mitoferrin-1 (Slc25a37).